The sequence spans 263 residues: MIYNKNPIPTEGEILIATVKQIFDYGSYVTLDEYGNLQAFLPWSEISSRWVKNIRDVIKEGRKIVVKVIRVDKRKGTIDVSLKKVTEDEKRKKMSQWKKIQKVDKILEIVSQKINKTEKEGWEQVAWKLEDKYGDAYDALVKAVKEGDSILKNAGVPEVWIKPLMEEIGKHIEEKRVKKSEIVTLRSSDPAGIEKIRKVLGAAVEIAENADVDIKIYTIGAPRYRIDIIGTDPKLLSKVMTEILDNIREISKEEKVEFNVVRK.

Residues 12–83 form the S1 motif domain; the sequence is GEILIATVKQ…RKGTIDVSLK (72 aa).

Belongs to the eIF-2-alpha family. As to quaternary structure, heterotrimer composed of an alpha, a beta and a gamma chain.

EIF-2 functions in the early steps of protein synthesis by forming a ternary complex with GTP and initiator tRNA. This Sulfurisphaera tokodaii (strain DSM 16993 / JCM 10545 / NBRC 100140 / 7) (Sulfolobus tokodaii) protein is Translation initiation factor 2 subunit alpha.